The primary structure comprises 940 residues: Isoleucine--tRNA ligase (940 aa).

The 'HIGH' region motif lies at 58 to 68 (PYANGSIHIGH). Glutamate 564 is a binding site for L-isoleucyl-5'-AMP. The 'KMSKS' region signature appears at 605–609 (KMSKS). Lysine 608 contacts ATP. 4 residues coordinate Zn(2+): cysteine 903, cysteine 906, cysteine 923, and cysteine 926.

Belongs to the class-I aminoacyl-tRNA synthetase family. IleS type 1 subfamily. In terms of assembly, monomer. The cofactor is Zn(2+).

The protein localises to the cytoplasm. It carries out the reaction tRNA(Ile) + L-isoleucine + ATP = L-isoleucyl-tRNA(Ile) + AMP + diphosphate. Its function is as follows. Catalyzes the attachment of isoleucine to tRNA(Ile). As IleRS can inadvertently accommodate and process structurally similar amino acids such as valine, to avoid such errors it has two additional distinct tRNA(Ile)-dependent editing activities. One activity is designated as 'pretransfer' editing and involves the hydrolysis of activated Val-AMP. The other activity is designated 'posttransfer' editing and involves deacylation of mischarged Val-tRNA(Ile). The sequence is that of Isoleucine--tRNA ligase from Shewanella woodyi (strain ATCC 51908 / MS32).